The following is a 229-amino-acid chain: Putative N-acetylmannosamine-6-phosphate 2-epimerase (229 aa).

This sequence belongs to the NanE family.

The catalysed reaction is an N-acyl-D-glucosamine 6-phosphate = an N-acyl-D-mannosamine 6-phosphate. It functions in the pathway amino-sugar metabolism; N-acetylneuraminate degradation; D-fructose 6-phosphate from N-acetylneuraminate: step 3/5. Its function is as follows. Converts N-acetylmannosamine-6-phosphate (ManNAc-6-P) to N-acetylglucosamine-6-phosphate (GlcNAc-6-P). This Escherichia coli O127:H6 (strain E2348/69 / EPEC) protein is Putative N-acetylmannosamine-6-phosphate 2-epimerase.